The sequence spans 405 residues: Low-salt glycan biosynthesis sulfotransferase Agl7 (405 aa).

Asp24, Asp201, and His202 together coordinate Ca(2+).

This sequence belongs to the sulfatase family. Requires Ca(2+) as cofactor.

It participates in protein modification; protein glycosylation. The protein operates within cell surface structure biogenesis; S-layer biogenesis. In terms of biological role, involved in N-glycan biosynthetic pathway that takes place under low-salt conditions (1.75 M instead of 3.4 M). Participates in the formation of the tetrasaccharide present at 'Asn-532' of S-layer glycoprotein Csg, consisting of a sulfated hexose, 2 hexoses and rhamnose. Mediates sulfation of sugar 1 in the tetrasaccharide. This Haloferax volcanii (strain ATCC 29605 / DSM 3757 / JCM 8879 / NBRC 14742 / NCIMB 2012 / VKM B-1768 / DS2) (Halobacterium volcanii) protein is Low-salt glycan biosynthesis sulfotransferase Agl7.